Consider the following 126-residue polypeptide: Putative lipoprotein LprD (126 aa).

The N-terminal stretch at 1–19 (MSTTRRRRPALVALVTIAA) is a signal peptide. Cys20 is lipidated: N-palmitoyl cysteine. Residue Cys20 is the site of S-diacylglycerol cysteine attachment. Residues 44-64 (GYALQWPLFAGFCLYTYHNFV) form a helical membrane-spanning segment.

The protein to M.tuberculosis Rv1343c.

It localises to the cell membrane. The polypeptide is Putative lipoprotein LprD (lprD) (Mycobacterium leprae (strain TN)).